Consider the following 305-residue polypeptide: Achromobactin-binding periplasmic protein (305 aa).

The N-terminal stretch at 1–29 is a signal peptide; it reads MNEYLVSRRRLLRLSLSLLPLGLGRPALA. One can recognise a Fe/B12 periplasmic-binding domain in the interval 37–302; it reads RVITLFQGAT…DIARVTGIAG (266 aa).

Belongs to the bacterial solute-binding protein 8 family.

Its subcellular location is the periplasm. Functionally, binds citrate- or chloride-dependent Fe(3+); part of the binding-protein-dependent transport system CbrABCD for uptake of the siderophore achromobactin. The polypeptide is Achromobactin-binding periplasmic protein (cbrA) (Dickeya dadantii (strain 3937) (Erwinia chrysanthemi (strain 3937))).